A 286-amino-acid chain; its full sequence is Homeobox-leucine zipper protein ATHB-20 (286 aa).

A DNA-binding region (homeobox) is located at residues 84-143; that stretch reads LGEKKKRLQLEQVKALEKSFELGNKLEPERKIQLAKALGMQPRQIAIWFQNRRARWKTRQ. The interval 144–179 is leucine-zipper; sequence LERDYDSLKKQFESLKSDNASLLAYNKKLLAEVMAL.

Belongs to the HD-ZIP homeobox family. Class I subfamily. Widely expressed.

The protein localises to the nucleus. Functionally, probable transcription factor. This is Homeobox-leucine zipper protein ATHB-20 (ATHB-20) from Arabidopsis thaliana (Mouse-ear cress).